A 732-amino-acid chain; its full sequence is Non-structural protein 4 (732 aa).

2 stretches are compositionally biased toward polar residues: residues 13 to 23 (KNKGIQQNQWH) and 31 to 56 (LSGQTKAEQGTSSQQAGVNQGENSKS). Disordered stretches follow at residues 13 to 74 (KNKG…NSAA) and 706 to 732 (LGRNAGPSKSWADQVEEAENEEEKQKE). The span at 719–732 (QVEEAENEEEKQKE) shows a compositional bias: acidic residues.

This is Non-structural protein 4 from Catharanthus roseus (Madagascar periwinkle).